Consider the following 384-residue polypeptide: Flap endonuclease 1 (384 aa).

Residues 1–108 form an N-domain region; that stretch reads MGIHKLMDLL…GELARRQKAK (108 aa). D34 lines the Mg(2+) pocket. Residue R74 participates in DNA binding. Residues D90, E162, E164, D183, and D185 each contribute to the Mg(2+) site. The I-domain stretch occupies residues 126–254; the sequence is EALKQEQRNL…VNAFKLITEH (129 aa). E162 contacts DNA. 2 residues coordinate DNA: G232 and D234. A Mg(2+)-binding site is contributed by D234. Positions 340–384 are disordered; the sequence is AKEHKGSQTRLNDFFKVQPKDTSSTSKASKKPTNTKSANKKGGKK. The interaction with PCNA stretch occupies residues 346–354; that stretch reads SQTRLNDFF. Residues 359 to 376 are compositionally biased toward low complexity; that stretch reads KDTSSTSKASKKPTNTKS.

It belongs to the XPG/RAD2 endonuclease family. FEN1 subfamily. Interacts with PCNA. Three molecules of FEN1 bind to one PCNA trimer with each molecule binding to one PCNA monomer. PCNA stimulates the nuclease activity without altering cleavage specificity. The cofactor is Mg(2+). Phosphorylated. Phosphorylation upon DNA damage induces relocalization to the nuclear plasma.

It is found in the nucleus. The protein localises to the nucleolus. Its subcellular location is the nucleoplasm. It localises to the mitochondrion. Its function is as follows. Structure-specific nuclease with 5'-flap endonuclease and 5'-3' exonuclease activities involved in DNA replication and repair. During DNA replication, cleaves the 5'-overhanging flap structure that is generated by displacement synthesis when DNA polymerase encounters the 5'-end of a downstream Okazaki fragment. It enters the flap from the 5'-end and then tracks to cleave the flap base, leaving a nick for ligation. Also involved in the long patch base excision repair (LP-BER) pathway, by cleaving within the apurinic/apyrimidinic (AP) site-terminated flap. Acts as a genome stabilization factor that prevents flaps from equilibrating into structures that lead to duplications and deletions. Also possesses 5'-3' exonuclease activity on nicked or gapped double-stranded DNA, and exhibits RNase H activity. Also involved in replication and repair of rDNA and in repairing mitochondrial DNA. The sequence is that of Flap endonuclease 1 from Tetrahymena thermophila (strain SB210).